Consider the following 397-residue polypeptide: CCA-adding enzyme (397 aa).

ATP-binding residues include Gly8 and Arg11. The CTP site is built by Gly8 and Arg11. Residues Glu21 and Asp23 each coordinate Mg(2+). ATP-binding residues include Arg91, Arg137, and Arg140. Positions 91, 137, and 140 each coordinate CTP. The 112-residue stretch at 213–324 (NLDAAIATLK…LALFNGCDAW (112 aa)) folds into the HD domain.

The protein belongs to the tRNA nucleotidyltransferase/poly(A) polymerase family. Bacterial CCA-adding enzyme type 2 subfamily. The cofactor is Mg(2+).

It carries out the reaction a tRNA precursor + 2 CTP + ATP = a tRNA with a 3' CCA end + 3 diphosphate. The enzyme catalyses a tRNA with a 3' CCA end + 2 CTP + ATP = a tRNA with a 3' CCACCA end + 3 diphosphate. Catalyzes the addition and repair of the essential 3'-terminal CCA sequence in tRNAs without using a nucleic acid template. Adds these three nucleotides in the order of C, C, and A to the tRNA nucleotide-73, using CTP and ATP as substrates and producing inorganic pyrophosphate. tRNA 3'-terminal CCA addition is required both for tRNA processing and repair. Also involved in tRNA surveillance by mediating tandem CCA addition to generate a CCACCA at the 3' terminus of unstable tRNAs. While stable tRNAs receive only 3'-terminal CCA, unstable tRNAs are marked with CCACCA and rapidly degraded. The polypeptide is CCA-adding enzyme (Alteromonas mediterranea (strain DSM 17117 / CIP 110805 / LMG 28347 / Deep ecotype)).